A 393-amino-acid polypeptide reads, in one-letter code: Dual specificity mitogen-activated protein kinase kinase 1 (393 aa).

The segment at 1-27 is disordered; the sequence is MPKKKPTPIQLNPAPDGSAVNGTSSAE. The Protein kinase domain maps to 68-361; the sequence is FEKISELGAG…LKQLMVHAFI (294 aa). ATP is bound by residues 74–82 and Lys97; that span reads LGAGNGGVV. Asp190 functions as the Proton acceptor in the catalytic mechanism. Residues Ser218 and Ser222 each carry the phosphoserine; by RAF modification. Positions 270 to 307 are RAF1-binding; sequence ELELMFGCQVEGDAAETPPRPRTPGRPLSSYGMDSRPP. Position 286 is a phosphothreonine (Thr286). Thr292 carries the post-translational modification Phosphothreonine; by MAPK1. Ser298 is modified (phosphoserine; by PAK).

Belongs to the protein kinase superfamily. STE Ser/Thr protein kinase family. MAP kinase kinase subfamily. As to quaternary structure, found in a complex with at least BRAF, HRAS, MAP2K1, MAPK3/ERK1 and RGS14. Forms a heterodimer with MAP2K2/MEK2. Forms heterodimers with KSR2 which further dimerize to form tetramers. Interacts with KSR1 or KSR2 and BRAF; the interaction with KSR1 or KSR2 mediates KSR1-BRAF or KSR2-BRAF dimerization. Interacts with ARBB2, LAMTOR3, MAPK1/ERK2 and RAF1. Interacts with MAPK1/ERK2. Interacts with MORG1. Interacts with PPARG. Interacts with SGK1. Interacts with BIRC6/bruce. Interacts with KAT7; the interaction promotes KAT7 phosphorylation. Interacts with RAF1 and NEK10; the interaction is required for ERK1/2-signaling pathway activation in response to UV irradiation. Interacts with TRAF3IP3. Interacts with MOS. Post-translationally, phosphorylation at Ser-218 and Ser-222 by MAP kinase kinase kinases (RAF or MEKK1) positively regulates the kinase activity. Also phosphorylated at Thr-292 by MAPK1/ERK2 and at Ser-298 by PAK. MAPK1/ERK2 phosphorylation of Thr-292 occurs in response to cellular adhesion and leads to inhibition of Ser-298 phosphorylation by PAK. Autophosphorylated at Ser-218 and Ser-222, autophosphosphorylation is promoted by NEK10 following UV irradiation.

It localises to the cytoplasm. The protein localises to the cytoskeleton. It is found in the microtubule organizing center. Its subcellular location is the centrosome. The protein resides in the spindle pole body. It localises to the nucleus. The protein localises to the membrane. It carries out the reaction L-seryl-[protein] + ATP = O-phospho-L-seryl-[protein] + ADP + H(+). The catalysed reaction is L-threonyl-[protein] + ATP = O-phospho-L-threonyl-[protein] + ADP + H(+). It catalyses the reaction L-tyrosyl-[protein] + ATP = O-phospho-L-tyrosyl-[protein] + ADP + H(+). With respect to regulation, ras proteins such as HRAS mediate the activation of RAF proteins such as RAF1 or BRAF which in turn activate extracellular signal-regulated kinases (ERK) through MAPK (mitogen-activated protein kinases) and ERK kinases MAP2K1/MEK1 and MAP2K2/MEK2. Activation occurs through phosphorylation of Ser-218 and Ser-222. MAP2K1/MEK1 binds KSR1 or KSR2 releasing the inhibitory intramolecular interaction between KSR1 or KSR2 protein kinase and N-terminal domains. This allows KSR1 or KSR2 dimerization with BRAF leading to BRAF activation and phosphorylation of MAP2K1. MAP2K1/MEK1 is also the target of negative feed-back regulation by its substrate kinases, such as MAPK1/ERK2. These phosphorylate MAP2K1/MEK1 on Thr-292, thereby facilitating dephosphorylation of the activating residues Ser-218 and Ser-222. Inhibited by serine/threonine phosphatase 2A. In terms of biological role, dual specificity protein kinase which acts as an essential component of the MAP kinase signal transduction pathway. Binding of extracellular ligands such as growth factors, cytokines and hormones to their cell-surface receptors activates RAS and this initiates RAF1 activation. RAF1 then further activates the dual-specificity protein kinases MAP2K1/MEK1 and MAP2K2/MEK2. Both MAP2K1/MEK1 and MAP2K2/MEK2 function specifically in the MAPK/ERK cascade, and catalyze the concomitant phosphorylation of a threonine and a tyrosine residue in a Thr-Glu-Tyr sequence located in the extracellular signal-regulated kinases MAPK3/ERK1 and MAPK1/ERK2, leading to their activation and further transduction of the signal within the MAPK/ERK cascade. Activates BRAF in a KSR1 or KSR2-dependent manner; by binding to KSR1 or KSR2 releases the inhibitory intramolecular interaction between KSR1 or KSR2 protein kinase and N-terminal domains which promotes KSR1 or KSR2-BRAF dimerization and BRAF activation. Depending on the cellular context, this pathway mediates diverse biological functions such as cell growth, adhesion, survival and differentiation, predominantly through the regulation of transcription, metabolism and cytoskeletal rearrangements. One target of the MAPK/ERK cascade is peroxisome proliferator-activated receptor gamma (PPARG), a nuclear receptor that promotes differentiation and apoptosis. MAP2K1/MEK1 has been shown to export PPARG from the nucleus. The MAPK/ERK cascade is also involved in the regulation of endosomal dynamics, including lysosome processing and endosome cycling through the perinuclear recycling compartment (PNRC), as well as in the fragmentation of the Golgi apparatus during mitosis. The chain is Dual specificity mitogen-activated protein kinase kinase 1 (MAP2K1) from Oryctolagus cuniculus (Rabbit).